A 165-amino-acid polypeptide reads, in one-letter code: C-phycoerythrin class 2 subunit alpha (165 aa).

Residue cysteine 75 participates in phycourobilin binding. (2R,3E)-phycoerythrobilin contacts are provided by cysteine 83 and cysteine 140.

Belongs to the phycobiliprotein family. In terms of assembly, heterodimer of an alpha and a beta chain. Contains two covalently linked phycoerythrobilin chromophores and one covalently linked phycourobilin chromophore.

It localises to the cellular thylakoid membrane. Functionally, light-harvesting photosynthetic bile pigment-protein from the phycobiliprotein complex. The sequence is that of C-phycoerythrin class 2 subunit alpha (mpeA) from Synechococcus sp. (strain WH8020).